The chain runs to 398 residues: Odorant receptor 59b (398 aa).

Topologically, residues 1 to 46 are cytoplasmic; it reads MAVFKLIKPAPLTEKVQSRQGNIYLYRAMWLIGWIPPKEGVLRYVY. The chain crosses the membrane as a helical span at residues 47–67; the sequence is LFWTCVPFAFGVFYLPVGFII. At 68–84 the chain is on the extracellular side; that stretch reads SYVQEFKNFTPGEFLTS. The helical transmembrane segment at 85-105 threads the bilayer; that stretch reads LQVCINVYGASVKSTITYLFL. Topologically, residues 106-141 are cytoplasmic; it reads WRLRKTEILLDSLDKRLANDSDRERIHNMVARCNYA. The chain crosses the membrane as a helical span at residues 142 to 162; that stretch reads FLIYSFIYCGYAGSTFLSYAL. Topologically, residues 163–179 are extracellular; it reads SGRPPWSVYNPFIDWRD. A helical transmembrane segment spans residues 180–200; the sequence is GMGSLWIQAIFEYITMSFAVL. The Cytoplasmic portion of the chain corresponds to 201–269; sequence QDQLSDTYPL…DMIRPMISRT (69 aa). Residues 270–290 traverse the membrane as a helical segment; the sequence is IFVQFALIGSVLGLTLVNVFF. Topologically, residues 291-293 are extracellular; the sequence is FSN. The helical transmembrane segment at 294 to 314 threads the bilayer; it reads FWKGVASLLFVITILLQTFPF. The Cytoplasmic portion of the chain corresponds to 315–348; that stretch reads CYTCNMLIDDAQDLSNEIFQSNWVDAEPRYKATL. The chain crosses the membrane as a helical span at residues 349–369; sequence VLFMHHVQQPIIFIAGGIFPI. Over 370 to 398 the chain is Extracellular; the sequence is SMNSNITVAKFAFSIITIVRQMNLAEQFQ. An N-linked (GlcNAc...) asparagine glycan is attached at N374.

The protein belongs to the insect chemoreceptor superfamily. Heteromeric odorant receptor channel (TC 1.A.69) family. Or2a subfamily. As to quaternary structure, interacts with Orco. Complexes exist early in the endomembrane system in olfactory sensory neurons (OSNs), coupling these complexes to the conserved ciliary trafficking pathway. As to expression, expressed in olfactory sensory neurons in the antenna.

Its subcellular location is the cell membrane. Functionally, odorant receptor which mediates acceptance or avoidance behavior, depending on its substrates. The odorant receptor repertoire encodes a large collection of odor stimuli that vary widely in identity, intensity, and duration. Forms a complex with Orco to form odorant-sensing units, providing sensitive and prolonged odorant signaling and calcium permeability. Also plays a role in the response to N,N-Diethyl-meta-toluamide (DEET), the most widely used insect repellent worldwide. In Drosophila melanogaster (Fruit fly), this protein is Odorant receptor 59b (Or59b).